We begin with the raw amino-acid sequence, 545 residues long: Glucose-6-phosphate isomerase (545 aa).

The active-site Proton donor is the E351. Active-site residues include H382 and K510.

The protein belongs to the GPI family.

The protein resides in the cytoplasm. The catalysed reaction is alpha-D-glucose 6-phosphate = beta-D-fructose 6-phosphate. Its pathway is carbohydrate biosynthesis; gluconeogenesis. It participates in carbohydrate degradation; glycolysis; D-glyceraldehyde 3-phosphate and glycerone phosphate from D-glucose: step 2/4. Functionally, catalyzes the reversible isomerization of glucose-6-phosphate to fructose-6-phosphate. The protein is Glucose-6-phosphate isomerase of Shewanella frigidimarina (strain NCIMB 400).